Here is a 457-residue protein sequence, read N- to C-terminus: Argininosuccinate lyase (457 aa).

This sequence belongs to the lyase 1 family. Argininosuccinate lyase subfamily.

It localises to the cytoplasm. The catalysed reaction is 2-(N(omega)-L-arginino)succinate = fumarate + L-arginine. It participates in amino-acid biosynthesis; L-arginine biosynthesis; L-arginine from L-ornithine and carbamoyl phosphate: step 3/3. The polypeptide is Argininosuccinate lyase (Citrobacter koseri (strain ATCC BAA-895 / CDC 4225-83 / SGSC4696)).